The chain runs to 544 residues: CTP synthase (544 aa).

Residues 1–266 form an amidoligase domain region; that stretch reads MTKFIFVTGG…DDLICERFGL (266 aa). Residue Ser13 participates in CTP binding. A UTP-binding site is contributed by Ser13. Residues 14-19 and Asp71 each bind ATP; that span reads SLGKGI. Mg(2+) is bound by residues Asp71 and Glu140. CTP is bound by residues 147-149, 187-192, and Lys223; these read DIE and KTKPTQ. UTP is bound by residues 187–192 and Lys223; that span reads KTKPTQ. One can recognise a Glutamine amidotransferase type-1 domain in the interval 291–543; the sequence is TVAMVGKYVE…VKAAKNYSEA (253 aa). Gly354 is an L-glutamine binding site. Cys381 serves as the catalytic Nucleophile; for glutamine hydrolysis. Residues 382–385, Glu404, and Arg471 contribute to the L-glutamine site; that span reads LGMQ. Active-site residues include His516 and Glu518.

The protein belongs to the CTP synthase family. As to quaternary structure, homotetramer.

It catalyses the reaction UTP + L-glutamine + ATP + H2O = CTP + L-glutamate + ADP + phosphate + 2 H(+). The enzyme catalyses L-glutamine + H2O = L-glutamate + NH4(+). The catalysed reaction is UTP + NH4(+) + ATP = CTP + ADP + phosphate + 2 H(+). It functions in the pathway pyrimidine metabolism; CTP biosynthesis via de novo pathway; CTP from UDP: step 2/2. With respect to regulation, allosterically activated by GTP, when glutamine is the substrate; GTP has no effect on the reaction when ammonia is the substrate. The allosteric effector GTP functions by stabilizing the protein conformation that binds the tetrahedral intermediate(s) formed during glutamine hydrolysis. Inhibited by the product CTP, via allosteric rather than competitive inhibition. Catalyzes the ATP-dependent amination of UTP to CTP with either L-glutamine or ammonia as the source of nitrogen. Regulates intracellular CTP levels through interactions with the four ribonucleotide triphosphates. The sequence is that of CTP synthase from Psychrobacter arcticus (strain DSM 17307 / VKM B-2377 / 273-4).